The sequence spans 194 residues: Large ribosomal subunit protein bL25 (194 aa).

The protein belongs to the bacterial ribosomal protein bL25 family. CTC subfamily. Part of the 50S ribosomal subunit; part of the 5S rRNA/L5/L18/L25 subcomplex. Contacts the 5S rRNA. Binds to the 5S rRNA independently of L5 and L18.

This is one of the proteins that binds to the 5S RNA in the ribosome where it forms part of the central protuberance. In Thermobifida fusca (strain YX), this protein is Large ribosomal subunit protein bL25.